The chain runs to 329 residues: GDP-mannose transporter (329 aa).

Residues Met1–Ser11 are Cytoplasmic-facing. The helical transmembrane segment at Leu12 to Val32 threads the bilayer. Residues Thr33–Gly40 lie on the Lumenal side of the membrane. The helical transmembrane segment at Val41–Ile61 threads the bilayer. The Cytoplasmic segment spans residues Ser62–Trp83. A helical membrane pass occupies residues Phe84–Leu104. Topologically, residues Ser105–Pro107 are lumenal. The helical transmembrane segment at Ile108 to Phe128 threads the bilayer. Topologically, residues Gly129–Arg131 are cytoplasmic. The helical transmembrane segment at Val132–Tyr152 threads the bilayer. Residues Gly153–Asn163 are Lumenal-facing. The chain crosses the membrane as a helical span at residues Phe164–Phe184. Residues Met185–Asp196 lie on the Cytoplasmic side of the membrane. Residues Phe197 to Thr217 traverse the membrane as a helical segment. Residues Thr218 to Ala237 are Lumenal-facing. The helical transmembrane segment at Val238 to Trp258 threads the bilayer. The Cytoplasmic segment spans residues Cys259–Thr266. The helical transmembrane segment at Thr267–Phe287 threads the bilayer. Residues Lys288–Pro290 are Lumenal-facing. A helical membrane pass occupies residues Ile291–Ile311. The Cytoplasmic segment spans residues Ala312–Ser329.

The protein belongs to the TPT transporter family. SLC35D subfamily. In terms of assembly, homooligomer.

It localises to the golgi apparatus membrane. It is found in the cytoplasmic vesicle membrane. Its subcellular location is the endoplasmic reticulum membrane. In terms of biological role, involved in the import of GDP-mannose from the cytoplasm into the Golgi lumen. This is GDP-mannose transporter (VIG4) from Komagataella pastoris (Yeast).